The sequence spans 312 residues: Porphobilinogen deaminase (312 aa).

An S-(dipyrrolylmethanemethyl)cysteine modification is found at cysteine 241.

It belongs to the HMBS family. Monomer. Requires dipyrromethane as cofactor.

It carries out the reaction 4 porphobilinogen + H2O = hydroxymethylbilane + 4 NH4(+). It functions in the pathway porphyrin-containing compound metabolism; protoporphyrin-IX biosynthesis; coproporphyrinogen-III from 5-aminolevulinate: step 2/4. In terms of biological role, tetrapolymerization of the monopyrrole PBG into the hydroxymethylbilane pre-uroporphyrinogen in several discrete steps. The polypeptide is Porphobilinogen deaminase (Trichlorobacter lovleyi (strain ATCC BAA-1151 / DSM 17278 / SZ) (Geobacter lovleyi)).